Reading from the N-terminus, the 220-residue chain is MGFLFGTRPTPTSIVNREDALPGRDEPILPHPAPHTVLGTPIDGPWKDGQRSVVVGLGCFWGAEKLFWQIDGVESTAVGYAGGYTPNPTYREVCTGRTGHAETVRVIYDPQEVSFEDLIRTFFEAHDPTQGFRQGNDVGTQYRSVIYAQTDDEVQKAREIAESFSHSLADAGYGGITTDISLLSDTPTKTMYLAEDEHQQYLDKNPNGYCPVHSTGVACR.

The active site involves C59.

It belongs to the MsrA Met sulfoxide reductase family.

The catalysed reaction is L-methionyl-[protein] + [thioredoxin]-disulfide + H2O = L-methionyl-(S)-S-oxide-[protein] + [thioredoxin]-dithiol. The enzyme catalyses [thioredoxin]-disulfide + L-methionine + H2O = L-methionine (S)-S-oxide + [thioredoxin]-dithiol. Functionally, has an important function as a repair enzyme for proteins that have been inactivated by oxidation. Catalyzes the reversible oxidation-reduction of methionine sulfoxide in proteins to methionine. In Corynebacterium kroppenstedtii (strain DSM 44385 / JCM 11950 / CIP 105744 / CCUG 35717), this protein is Peptide methionine sulfoxide reductase MsrA.